The sequence spans 153 residues: Proline-rich membrane anchor 1 (153 aa).

A signal peptide spans 1 to 35; that stretch reads MLLRDLVLRRGCCWSSLLLHCALHPLWGFVQVTHG. The Extracellular portion of the chain corresponds to 36 to 92; it reads EPQKSCSKVTDSCRHVCQCRPPPPLPPPPPPPPPPRLLSAPAPNSTSCPTEESWWSG. A PRAD domain is found at 56-70; it reads PPPPLPPPPPPPPPP. The span at 59-71 shows a compositional bias: pro residues; it reads PLPPPPPPPPPPR. Residues 59–79 are disordered; that stretch reads PLPPPPPPPPPPRLLSAPAPN. N-linked (GlcNAc...) asparagine glycosylation occurs at Asn79. The helical transmembrane segment at 93 to 113 threads the bilayer; sequence LVIIIAVCCASLVFLTVLVII. Topologically, residues 114-153 are cytoplasmic; it reads CYKAIKRKPLRKDENGTSVAEYPMSASQSNKGVDVNNAVV.

In terms of assembly, interacts with ACHE, probably through disulfide bonds.

Its subcellular location is the cell membrane. It localises to the cell junction. The protein resides in the synapse. Functionally, required to anchor acetylcholinesterase (ACHE) to the basal lamina of the neuromuscular junction and to the membrane of neuronal synapses in brain. Also able to organize ACHE into tetramers. The polypeptide is Proline-rich membrane anchor 1 (PRIMA1) (Homo sapiens (Human)).